The chain runs to 465 residues: ATP synthase subunit beta (465 aa).

Residue 152–159 participates in ATP binding; the sequence is GGAGVGKT.

This sequence belongs to the ATPase alpha/beta chains family. F-type ATPases have 2 components, CF(1) - the catalytic core - and CF(0) - the membrane proton channel. CF(1) has five subunits: alpha(3), beta(3), gamma(1), delta(1), epsilon(1). CF(0) has three main subunits: a(1), b(2) and c(9-12). The alpha and beta chains form an alternating ring which encloses part of the gamma chain. CF(1) is attached to CF(0) by a central stalk formed by the gamma and epsilon chains, while a peripheral stalk is formed by the delta and b chains.

It is found in the cell inner membrane. The enzyme catalyses ATP + H2O + 4 H(+)(in) = ADP + phosphate + 5 H(+)(out). Produces ATP from ADP in the presence of a proton gradient across the membrane. The catalytic sites are hosted primarily by the beta subunits. The sequence is that of ATP synthase subunit beta from Campylobacter hominis (strain ATCC BAA-381 / DSM 21671 / CCUG 45161 / LMG 19568 / NCTC 13146 / CH001A).